A 368-amino-acid polypeptide reads, in one-letter code: Peptide chain release factor 2 (368 aa).

Glutamine 250 bears the N5-methylglutamine mark.

It belongs to the prokaryotic/mitochondrial release factor family. Methylated by PrmC. Methylation increases the termination efficiency of RF2.

The protein localises to the cytoplasm. In terms of biological role, peptide chain release factor 2 directs the termination of translation in response to the peptide chain termination codons UGA and UAA. This is Peptide chain release factor 2 from Chlamydia trachomatis serovar L2b (strain UCH-1/proctitis).